A 136-amino-acid polypeptide reads, in one-letter code: Histone H3 (136 aa).

Positions 1-43 (MARTKQTARKNVGGKAPRKHIGQKSARKTASTTAGMKKPHRYR) are disordered. Lys-10 is subject to N6-methylated lysine. 2 positions are modified to N6-acetyllysine: Lys-15 and Lys-24. Over residues 16–27 (APRKHIGQKSAR) the composition is skewed to basic residues. N6-methylated lysine is present on residues Lys-28 and Lys-37.

This sequence belongs to the histone H3 family. In terms of assembly, the nucleosome is a histone octamer containing two molecules each of H2A, H2B, H3 and H4 assembled in one H3-H4 heterotetramer and two H2A-H2B heterodimers. The octamer wraps approximately 147 bp of DNA.

Its subcellular location is the nucleus. The protein localises to the chromosome. Its function is as follows. Core component of nucleosome. Nucleosomes wrap and compact DNA into chromatin, limiting DNA accessibility to the cellular machineries which require DNA as a template. Histones thereby play a central role in transcription regulation, DNA repair, DNA replication and chromosomal stability. DNA accessibility is regulated via a complex set of post-translational modifications of histones, also called histone code, and nucleosome remodeling. This Euplotes crassus protein is Histone H3.